The primary structure comprises 492 residues: Beta-Ala-His dipeptidase (492 aa).

Histidine 107 provides a ligand contact to Zn(2+). Residue aspartate 109 is part of the active site. Aspartate 140 is a Zn(2+) binding site. The active-site Proton acceptor is the glutamate 174. Residue glutamate 175 participates in Zn(2+) binding. Serine 194 bears the Phosphoserine mark. Positions 203 and 453 each coordinate Zn(2+).

The protein belongs to the peptidase M20A family. As to quaternary structure, homodimer. Zn(2+) serves as cofactor. In terms of tissue distribution, detected exclusively in kidney.

It is found in the secreted. It catalyses the reaction Preferential hydrolysis of the beta-Ala-|-His dipeptide (carnosine), and also anserine, Xaa-|-His dipeptides and other dipeptides including homocarnosine.. It carries out the reaction carnosine + H2O = beta-alanine + L-histidine. The enzyme catalyses anserine + H2O = N(pros)-methyl-L-histidine + beta-alanine. The catalysed reaction is L-alanyl-L-histidine + H2O = L-histidine + L-alanine. It catalyses the reaction glycyl-L-histidine + H2O = L-histidine + glycine. It carries out the reaction L-homocarnosine + H2O = 4-aminobutanoate + L-histidine. Functionally, catalyzes the peptide bond hydrolysis in Xaa-His dipeptides, displaying the highest activity toward carnosine (beta-alanyl-L-histidine) and anserine (beta-alanyl-3-methyl-histidine). In Rattus norvegicus (Rat), this protein is Beta-Ala-His dipeptidase (Cndp1).